Here is a 93-residue protein sequence, read N- to C-terminus: Cobalt transport protein CbiN (93 aa).

Helical transmembrane passes span 5–25 and 63–83; these read LMLLAMVVALVILPFFINHGG and LLFTLQGSLGAAVIFYILGYC.

This sequence belongs to the CbiN family. As to quaternary structure, forms an energy-coupling factor (ECF) transporter complex composed of an ATP-binding protein (A component, CbiO), a transmembrane protein (T component, CbiQ) and 2 possible substrate-capture proteins (S components, CbiM and CbiN) of unknown stoichimetry.

Its subcellular location is the cell inner membrane. It functions in the pathway cofactor biosynthesis; adenosylcobalamin biosynthesis. Part of the energy-coupling factor (ECF) transporter complex CbiMNOQ involved in cobalt import. In Salmonella gallinarum (strain 287/91 / NCTC 13346), this protein is Cobalt transport protein CbiN.